The chain runs to 208 residues: Guanylate kinase (208 aa).

The Guanylate kinase-like domain maps to 4–185 (GNLYIISAPS…ALVDLEHILR (182 aa)). 11–18 (APSGAGKS) contributes to the ATP binding site.

Belongs to the guanylate kinase family.

It is found in the cytoplasm. It carries out the reaction GMP + ATP = GDP + ADP. Functionally, essential for recycling GMP and indirectly, cGMP. This Histophilus somni (strain 129Pt) (Haemophilus somnus) protein is Guanylate kinase.